The chain runs to 248 residues: Tryptophan synthase alpha chain (248 aa).

Catalysis depends on proton acceptor residues Glu-36 and Asp-47.

The protein belongs to the TrpA family. In terms of assembly, tetramer of two alpha and two beta chains.

It catalyses the reaction (1S,2R)-1-C-(indol-3-yl)glycerol 3-phosphate + L-serine = D-glyceraldehyde 3-phosphate + L-tryptophan + H2O. The protein operates within amino-acid biosynthesis; L-tryptophan biosynthesis; L-tryptophan from chorismate: step 5/5. The alpha subunit is responsible for the aldol cleavage of indoleglycerol phosphate to indole and glyceraldehyde 3-phosphate. This Archaeoglobus fulgidus (strain ATCC 49558 / DSM 4304 / JCM 9628 / NBRC 100126 / VC-16) protein is Tryptophan synthase alpha chain.